A 1050-amino-acid polypeptide reads, in one-letter code: Diacylglycerol kinase iota (1050 aa).

Disordered stretches follow at residues 52-73 (NPSS…SGSG) and 325-356 (PQNS…ENKG). Basic residues predominate over residues 332 to 347 (SNRKKKRTSFKRKASK). Residues 367–502 (PLMKPLLVFV…DRWNLHVERN (136 aa)) enclose the DAGKc domain. 2 ANK repeats span residues 943–972 (GHCS…AELL) and 979–1008 (TGET…SLRQ). Positions 1048–1050 (TAV) match the PDZ-binding motif.

Belongs to the eukaryotic diacylglycerol kinase family. As to quaternary structure, interacts (via PDZ-binding motif) with DLG4; controls the localization of DGKI to the synapse. Interacts (via PDZ-binding motif) with DLG1. Interacts (via PDZ-binding motif) with DLG2. Interacts (via PDZ-binding motif) with DLG3. May interact with RASGRP3; involved in the regulation of RASGRP3 activity. Specifically expressed in brain (at protein level). Expressed in hippocampus, cerebellum, brain stem and spinal cord (at protein level). Highly expressed in hippocampus, cerebellar cortex, olfactory bulb, and olfactory tubercle and to lower extent in the cerebral cortex, caudate putamen, and thalamus. Not detected in the white matter. Also expressed in eye. In terms of tissue distribution, major isoform in brain (at protein level). As to expression, minor isoform in brain (at protein level). Expressed in brain (at protein level).

The protein resides in the cell projection. It localises to the axon. The protein localises to the dendrite. It is found in the presynapse. Its subcellular location is the postsynapse. The protein resides in the postsynaptic density. It localises to the synaptic cell membrane. The protein localises to the cytoplasmic vesicle. It is found in the secretory vesicle. Its subcellular location is the synaptic vesicle membrane. The protein resides in the cytoplasm. It localises to the cytosol. The protein localises to the nucleus. The catalysed reaction is a 1,2-diacyl-sn-glycerol + ATP = a 1,2-diacyl-sn-glycero-3-phosphate + ADP + H(+). It catalyses the reaction 1,2-di-(9Z-octadecenoyl)-sn-glycerol + ATP = 1,2-di-(9Z-octadecenoyl)-sn-glycero-3-phosphate + ADP + H(+). It carries out the reaction 1-octadecanoyl-2-(9Z,12Z)-octadecadienoyl-sn-glycerol + ATP = 1-octadecanoyl-2-(9Z,12Z-octadecadienoyl)-sn-glycero-3-phosphate + ADP + H(+). The enzyme catalyses 1-octadecanoyl-2-(5Z,8Z,11Z,14Z-eicosatetraenoyl)-sn-glycerol + ATP = 1-octadecanoyl-2-(5Z,8Z,11Z,14Z-eicosatetraenoyl)-sn-glycero-3-phosphate + ADP + H(+). The protein operates within lipid metabolism; glycerolipid metabolism. Its activity is regulated as follows. Activated by phosphatidylserine. In terms of biological role, diacylglycerol kinase that converts diacylglycerol/DAG into phosphatidic acid/phosphatidate/PA and regulates the respective levels of these two bioactive lipids. Thereby, acts as a central switch between the signaling pathways activated by these second messengers with different cellular targets and opposite effects in numerous biological processes. Has probably no preference for any of the diacylglycerols in terms of the acyl chain composition, especially for the acyl chain at the sn-2 position. By controlling the diacylglycerol/DAG-mediated activation of RASGRP3, negatively regulates the Rap1 signaling pathway. May play a role in presynaptic diacylglycerol/DAG signaling and control neurotransmitter release during metabotropic glutamate receptor-dependent long-term depression. Its function is as follows. Has a decreased affinity for ATP and a reduced diacylglycerol kinase activity. Has no preference for any of the diacylglycerols in terms of the acyl chain composition. Has no diacylglycerol kinase activity. This is Diacylglycerol kinase iota from Rattus norvegicus (Rat).